Consider the following 553-residue polypeptide: Dihydroxy-acid dehydratase (553 aa).

A Mg(2+)-binding site is contributed by Asp78. Residue Cys119 coordinates [2Fe-2S] cluster. Residues Asp120 and Lys121 each coordinate Mg(2+). Residue Lys121 is modified to N6-carboxylysine. Cys193 contributes to the [2Fe-2S] cluster binding site. Glu441 is a Mg(2+) binding site. Ser467 acts as the Proton acceptor in catalysis.

This sequence belongs to the IlvD/Edd family. In terms of assembly, homodimer. Requires [2Fe-2S] cluster as cofactor. Mg(2+) serves as cofactor.

It carries out the reaction (2R)-2,3-dihydroxy-3-methylbutanoate = 3-methyl-2-oxobutanoate + H2O. The catalysed reaction is (2R,3R)-2,3-dihydroxy-3-methylpentanoate = (S)-3-methyl-2-oxopentanoate + H2O. Its pathway is amino-acid biosynthesis; L-isoleucine biosynthesis; L-isoleucine from 2-oxobutanoate: step 3/4. It participates in amino-acid biosynthesis; L-valine biosynthesis; L-valine from pyruvate: step 3/4. Its function is as follows. Functions in the biosynthesis of branched-chain amino acids. Catalyzes the dehydration of (2R,3R)-2,3-dihydroxy-3-methylpentanoate (2,3-dihydroxy-3-methylvalerate) into 2-oxo-3-methylpentanoate (2-oxo-3-methylvalerate) and of (2R)-2,3-dihydroxy-3-methylbutanoate (2,3-dihydroxyisovalerate) into 2-oxo-3-methylbutanoate (2-oxoisovalerate), the penultimate precursor to L-isoleucine and L-valine, respectively. The sequence is that of Dihydroxy-acid dehydratase from Citrifermentans bemidjiense (strain ATCC BAA-1014 / DSM 16622 / JCM 12645 / Bem) (Geobacter bemidjiensis).